The chain runs to 254 residues: DNA repair protein RecO (254 aa).

This sequence belongs to the RecO family.

Its function is as follows. Involved in DNA repair and RecF pathway recombination. In Rhodopseudomonas palustris (strain BisB18), this protein is DNA repair protein RecO.